The sequence spans 785 residues: Probable serine protease Ga0098714_109514 (785 aa).

2 stretches are compositionally biased toward basic and acidic residues: residues 470–481 and 491–501; these read LDHGKNGREGGR and DGPEHPNHYAD. 2 disordered regions span residues 470 to 503 and 608 to 629; these read LDHG…ADID and DGDA…EEVS.

It belongs to the peptidase S1 family.

Probably a dedicated protease for substrate gasdermin bGSDM; cleaves the bGSDM precursor, releasing the pore-forming moiety, which integrates into the membrane and triggers cell death. Involved in defense against bacteriophages. Expression of gasdermin bGSDM and this neighboring protease is toxic in E.coli on solid medium. The sequence is that of Probable serine protease Ga0098714_109514 from Bradyrhizobium tropiciagri.